Here is a 324-residue protein sequence, read N- to C-terminus: Endochitinase 1 (324 aa).

An N-terminal signal peptide occupies residues 1–22; that stretch reads MSFLQALSIFLLLLLYVVVGSA. Residues 23-64 enclose the Chitin-binding type-1 domain; that stretch reads EQCGRQAGGALCPGGLCCSQFGWCGSTADYCTVPGCQSQCSG. Cystine bridges form between Cys25–Cys40, Cys34–Cys46, Cys39–Cys53, Cys58–Cys62, Cys95–Cys158, Cys170–Cys178, and Cys277–Cys309. Glu139 serves as the catalytic Proton donor. The propeptide at 318–324 is removed in mature form; sequence GVSVDSM.

This sequence belongs to the glycosyl hydrolase 19 family. Chitinase class I subfamily.

The enzyme catalyses Random endo-hydrolysis of N-acetyl-beta-D-glucosaminide (1-&gt;4)-beta-linkages in chitin and chitodextrins.. Defense against chitin-containing fungal pathogens. The sequence is that of Endochitinase 1 from Gossypium hirsutum (Upland cotton).